The chain runs to 510 residues: 2-isopropylmalate synthase (510 aa).

The 263-residue stretch at 5 to 267 folds into the Pyruvate carboxyltransferase domain; that stretch reads LIIFDTTLRD…DTRIDSVHIV (263 aa). Asp14, His202, His204, and Asn238 together coordinate Mn(2+). The regulatory domain stretch occupies residues 392 to 510; the sequence is KLLSLTAHSE…SKLERAHPQV (119 aa).

This sequence belongs to the alpha-IPM synthase/homocitrate synthase family. LeuA type 1 subfamily. As to quaternary structure, homodimer. Requires Mn(2+) as cofactor.

It is found in the cytoplasm. The catalysed reaction is 3-methyl-2-oxobutanoate + acetyl-CoA + H2O = (2S)-2-isopropylmalate + CoA + H(+). The protein operates within amino-acid biosynthesis; L-leucine biosynthesis; L-leucine from 3-methyl-2-oxobutanoate: step 1/4. Catalyzes the condensation of the acetyl group of acetyl-CoA with 3-methyl-2-oxobutanoate (2-ketoisovalerate) to form 3-carboxy-3-hydroxy-4-methylpentanoate (2-isopropylmalate). The sequence is that of 2-isopropylmalate synthase from Nitrosospira multiformis (strain ATCC 25196 / NCIMB 11849 / C 71).